The chain runs to 134 residues: MNTEMYQTPMEVAVYQLHNFSISFFSSLLGGDVVSVKLDNSASGASVVAIDNKIEQAMDLVKNHLMYAVREEVEILKEQIRELVEKNSQLERENTLLKTLASPEQLEKFQSCLSPEEPAPESPQVPEAPGGSAV.

Residue methionine 1 is modified to N-acetylmethionine. Residues 1–60 form an AP1-binding region; that stretch reads MNTEMYQTPMEVAVYQLHNFSISFFSSLLGGDVVSVKLDNSASGASVVAIDNKIEQAMDL. Phosphoserine occurs at positions 42 and 73. The leucine-zipper stretch occupies residues 76 to 97; the sequence is LKEQIRELVEKNSQLERENTLL. Serine 102 is modified (phosphoserine). Residues 108–134 form a disordered region; sequence KFQSCLSPEEPAPESPQVPEAPGGSAV.

The protein belongs to the TSC-22/Dip/Bun family. In terms of assembly, can form homodimers, however it is likely to function as a monomer. Interacts with NFKB1. Interacts (via N-terminus) with JUN and FOS; these interactions inhibit the binding of active AP1 to its target DNA. Interacts with MYOD1. Interacts with HDAC1; this interaction affects HDAC1 activity on MYOG promoter and thus inhibits MYOD1 transcriptional activity. As to expression, ubiquitously expressed, including in the fetal brain and liver. Expressed in brain, lung, spleen and skeletal muscle. Lower levels detected in heart and kidney. Not detected in the pancreas. In non-lymphoid tissues, in the absence of inflammation, the major source of constitutive expression is the macrophage lineage. Also expressed in cells from different hemopoietic cell lineages, including bone marrow cells, CD34+ stem cells, mature B- and T-cells, monocytes and granulocytes. Down-regulated in activated macrophages from inflammatory lesions of delayed-type hypersensitivity (DTH) reactions, such as in tuberculosis and in Crohn disease, whereas in Burkitt lymphoma, persists in macrophages involved in the phagocytosis of apoptotic malignant cells.

Its subcellular location is the cytoplasm. It is found in the nucleus. Functionally, protects T-cells from IL2 deprivation-induced apoptosis through the inhibition of FOXO3A transcriptional activity that leads to the down-regulation of the pro-apoptotic factor BCL2L11. In macrophages, plays a role in the anti-inflammatory and immunosuppressive effects of glucocorticoids and IL10. In T-cells, inhibits anti-CD3-induced NFKB1 nuclear translocation and thereby NFKB1 DNA-binding activities. In vitro, suppresses AP-1 transcription factor complex DNA-binding activities. Its function is as follows. Inhibits myogenic differentiation and mediates anti-myogenic effects of glucocorticoids by binding and regulating MYOD1 and HDAC1 transcriptional activity resulting in reduced expression of MYOG. The polypeptide is TSC22 domain family protein 3 (Homo sapiens (Human)).